A 449-amino-acid chain; its full sequence is Probable phosphoglucosamine mutase (449 aa).

The Phosphoserine intermediate role is filled by S101. Positions 101, 239, 241, and 243 each coordinate Mg(2+). Phosphoserine is present on S101.

It belongs to the phosphohexose mutase family. Mg(2+) is required as a cofactor. Activated by phosphorylation.

It catalyses the reaction alpha-D-glucosamine 1-phosphate = D-glucosamine 6-phosphate. Functionally, catalyzes the conversion of glucosamine-6-phosphate to glucosamine-1-phosphate. The polypeptide is Probable phosphoglucosamine mutase (Methanothermobacter thermautotrophicus (strain ATCC 29096 / DSM 1053 / JCM 10044 / NBRC 100330 / Delta H) (Methanobacterium thermoautotrophicum)).